The following is a 79-amino-acid chain: uncharacterized protein (79 aa).

Residues 1–33 (MRLSIRAIVLFALVWIGLLMSGYGVLVGSKVNA) form the signal peptide.

This is an uncharacterized protein from Salmonella paratyphi A (strain ATCC 9150 / SARB42).